Here is a 293-residue protein sequence, read N- to C-terminus: Ribokinase (293 aa).

Substrate is bound by residues 11–13 (SMD), 39–43 (GKGAN), and E139. Residues N183 and 210 to 215 (TEGKQG) contribute to the ATP site. 2 residues coordinate K(+): D236 and T238. ATP-binding positions include 241–242 (GD) and N266. Residue D242 participates in substrate binding. D242 (proton acceptor) is an active-site residue. The K(+) site is built by S272, S275, and G277.

This sequence belongs to the carbohydrate kinase PfkB family. Ribokinase subfamily. As to quaternary structure, homodimer. Mg(2+) is required as a cofactor.

It localises to the cytoplasm. The catalysed reaction is D-ribose + ATP = D-ribose 5-phosphate + ADP + H(+). Its pathway is carbohydrate metabolism; D-ribose degradation; D-ribose 5-phosphate from beta-D-ribopyranose: step 2/2. Activated by a monovalent cation that binds near, but not in, the active site. The most likely occupant of the site in vivo is potassium. Ion binding induces a conformational change that may alter substrate affinity. Catalyzes the phosphorylation of ribose at O-5 in a reaction requiring ATP and magnesium. The resulting D-ribose-5-phosphate can then be used either for sythesis of nucleotides, histidine, and tryptophan, or as a component of the pentose phosphate pathway. The chain is Ribokinase from Bacillus subtilis (strain 168).